Reading from the N-terminus, the 257-residue chain is MADNQEGRPYFPLDEGSIIEGVSDQVIVVVLLSFVAVGSLLYLLLRNDEQNIHPENQDRVRAVREQLQNEQETPPPPRPQFYSDMTCPVCLQQATFPVETNCGHLFCGSCIIAYWRYGSWLGAINCPICRQTVTLIFPLFQATEQEDSQNILREAIGYNRRFSGQPRSLMDRIMDLPTLLRHAFREMFSVGGLFWMFRIRIVLCLLGALFYLVSPLDIIPEAVFGLLGFLDDFFVLFLLLIYISIMYREVVTQRLYR.

The Lumenal portion of the chain corresponds to 1–24 (MADNQEGRPYFPLDEGSIIEGVSD). A helical membrane pass occupies residues 25-45 (QVIVVVLLSFVAVGSLLYLLL). Over 46–200 (RNDEQNIHPE…GGLFWMFRIR (155 aa)) the chain is Cytoplasmic. The segment at 87-130 (CPVCLQQATFPVETNCGHLFCGSCIIAYWRYGSWLGAINCPICR) adopts an RING-type zinc-finger fold. The helical transmembrane segment at 201-221 (IVLCLLGALFYLVSPLDIIPE) threads the bilayer. A topological domain (lumenal) is located at residue alanine 222. The helical transmembrane segment at 223–243 (VFGLLGFLDDFFVLFLLLIYI) threads the bilayer. The Cytoplasmic segment spans residues 244-257 (SIMYREVVTQRLYR).

Its subcellular location is the endoplasmic reticulum membrane. The enzyme catalyses S-ubiquitinyl-[E2 ubiquitin-conjugating enzyme]-L-cysteine + [acceptor protein]-L-lysine = [E2 ubiquitin-conjugating enzyme]-L-cysteine + N(6)-ubiquitinyl-[acceptor protein]-L-lysine.. The protein operates within protein modification; protein ubiquitination. Functionally, E3 ubiquitin-protein ligase that plays an essential role in stimulus-induced inositol 1,4,5-trisphosphate receptor (ITPR) ubiquitination and degradation via the endoplasmic reticulum-associated degradation (ERAD) pathway. Also involved in ITPR turnover in resting cells. This is E3 ubiquitin-protein ligase RNF170 (rnf170) from Xenopus tropicalis (Western clawed frog).